Here is a 150-residue protein sequence, read N- to C-terminus: Deoxyuridine 5'-triphosphate nucleotidohydrolase (150 aa).

Substrate-binding positions include 69–71 (RSG), N82, 86–88 (LID), and M96.

The protein belongs to the dUTPase family. It depends on Mg(2+) as a cofactor.

The catalysed reaction is dUTP + H2O = dUMP + diphosphate + H(+). It participates in pyrimidine metabolism; dUMP biosynthesis; dUMP from dCTP (dUTP route): step 2/2. This enzyme is involved in nucleotide metabolism: it produces dUMP, the immediate precursor of thymidine nucleotides and it decreases the intracellular concentration of dUTP so that uracil cannot be incorporated into DNA. The sequence is that of Deoxyuridine 5'-triphosphate nucleotidohydrolase from Acinetobacter baylyi (strain ATCC 33305 / BD413 / ADP1).